Consider the following 265-residue polypeptide: Undecaprenyl-diphosphatase (265 aa).

Transmembrane regions (helical) follow at residues 1–21 (MDIL…FLPI), 39–59 (QGLA…ILYF), 86–106 (WCII…GNFI), 112–132 (SVSV…FADA), 140–160 (LAQM…LAMI), 186–206 (FSFL…GLKL), 219–239 (VGVL…LSFI), and 244–264 (MLPF…LVWF).

Belongs to the UppP family.

It localises to the cell inner membrane. The catalysed reaction is di-trans,octa-cis-undecaprenyl diphosphate + H2O = di-trans,octa-cis-undecaprenyl phosphate + phosphate + H(+). Functionally, catalyzes the dephosphorylation of undecaprenyl diphosphate (UPP). Confers resistance to bacitracin. In Saccharophagus degradans (strain 2-40 / ATCC 43961 / DSM 17024), this protein is Undecaprenyl-diphosphatase.